We begin with the raw amino-acid sequence, 282 residues long: 4-deoxy-L-threo-5-hexosulose-uronate ketol-isomerase 2 (282 aa).

Positions 200, 202, 207, and 249 each coordinate Zn(2+).

This sequence belongs to the KduI family. Zn(2+) serves as cofactor.

It catalyses the reaction 5-dehydro-4-deoxy-D-glucuronate = 3-deoxy-D-glycero-2,5-hexodiulosonate. It participates in glycan metabolism; pectin degradation; 2-dehydro-3-deoxy-D-gluconate from pectin: step 4/5. Catalyzes the isomerization of 5-dehydro-4-deoxy-D-glucuronate to 3-deoxy-D-glycero-2,5-hexodiulosonate. The chain is 4-deoxy-L-threo-5-hexosulose-uronate ketol-isomerase 2 (kduI2) from Rhizobium meliloti (strain 1021) (Ensifer meliloti).